The sequence spans 262 residues: Hydroxyethylthiazole kinase (262 aa).

Met-43 is a substrate binding site. ATP is bound by residues Arg-118 and Thr-164. Ala-191 contacts substrate.

The protein belongs to the Thz kinase family. Requires Mg(2+) as cofactor.

The enzyme catalyses 5-(2-hydroxyethyl)-4-methylthiazole + ATP = 4-methyl-5-(2-phosphooxyethyl)-thiazole + ADP + H(+). The protein operates within cofactor biosynthesis; thiamine diphosphate biosynthesis; 4-methyl-5-(2-phosphoethyl)-thiazole from 5-(2-hydroxyethyl)-4-methylthiazole: step 1/1. Functionally, catalyzes the phosphorylation of the hydroxyl group of 4-methyl-5-beta-hydroxyethylthiazole (THZ). The protein is Hydroxyethylthiazole kinase of Cereibacter sphaeroides (strain ATCC 17029 / ATH 2.4.9) (Rhodobacter sphaeroides).